Reading from the N-terminus, the 218-residue chain is Probable transaldolase 2 (218 aa).

Lysine 83 serves as the catalytic Schiff-base intermediate with substrate.

It belongs to the transaldolase family. Type 3B subfamily.

It is found in the cytoplasm. It catalyses the reaction D-sedoheptulose 7-phosphate + D-glyceraldehyde 3-phosphate = D-erythrose 4-phosphate + beta-D-fructose 6-phosphate. It participates in carbohydrate degradation; pentose phosphate pathway; D-glyceraldehyde 3-phosphate and beta-D-fructose 6-phosphate from D-ribose 5-phosphate and D-xylulose 5-phosphate (non-oxidative stage): step 2/3. Transaldolase is important for the balance of metabolites in the pentose-phosphate pathway. The chain is Probable transaldolase 2 from Listeria innocua serovar 6a (strain ATCC BAA-680 / CLIP 11262).